A 383-amino-acid chain; its full sequence is 4-hydroxy-3-methylbut-2-en-1-yl diphosphate synthase (flavodoxin) (383 aa).

[4Fe-4S] cluster is bound by residues cysteine 275, cysteine 278, cysteine 310, and glutamate 317.

It belongs to the IspG family. The cofactor is [4Fe-4S] cluster.

The catalysed reaction is (2E)-4-hydroxy-3-methylbut-2-enyl diphosphate + oxidized [flavodoxin] + H2O + 2 H(+) = 2-C-methyl-D-erythritol 2,4-cyclic diphosphate + reduced [flavodoxin]. Its pathway is isoprenoid biosynthesis; isopentenyl diphosphate biosynthesis via DXP pathway; isopentenyl diphosphate from 1-deoxy-D-xylulose 5-phosphate: step 5/6. In terms of biological role, converts 2C-methyl-D-erythritol 2,4-cyclodiphosphate (ME-2,4cPP) into 1-hydroxy-2-methyl-2-(E)-butenyl 4-diphosphate. In Dinoroseobacter shibae (strain DSM 16493 / NCIMB 14021 / DFL 12), this protein is 4-hydroxy-3-methylbut-2-en-1-yl diphosphate synthase (flavodoxin).